A 320-amino-acid polypeptide reads, in one-letter code: Aspartate carbamoyltransferase catalytic subunit (320 aa).

Carbamoyl phosphate contacts are provided by R68 and T69. Residue K96 participates in L-aspartate binding. The carbamoyl phosphate site is built by R118, H148, and Q151. Positions 181 and 236 each coordinate L-aspartate. Carbamoyl phosphate-binding residues include G277 and P278.

Belongs to the aspartate/ornithine carbamoyltransferase superfamily. ATCase family. As to quaternary structure, heterododecamer (2C3:3R2) of six catalytic PyrB chains organized as two trimers (C3), and six regulatory PyrI chains organized as three dimers (R2).

It catalyses the reaction carbamoyl phosphate + L-aspartate = N-carbamoyl-L-aspartate + phosphate + H(+). It participates in pyrimidine metabolism; UMP biosynthesis via de novo pathway; (S)-dihydroorotate from bicarbonate: step 2/3. Its function is as follows. Catalyzes the condensation of carbamoyl phosphate and aspartate to form carbamoyl aspartate and inorganic phosphate, the committed step in the de novo pyrimidine nucleotide biosynthesis pathway. The sequence is that of Aspartate carbamoyltransferase catalytic subunit from Polaromonas sp. (strain JS666 / ATCC BAA-500).